The following is a 384-amino-acid chain: Multidrug/solvent efflux pump periplasmic linker protein MepA (384 aa).

The signal sequence occupies residues Met-1–Gly-22. Cys-23 carries the N-palmitoyl cysteine lipid modification. Residue Cys-23 is the site of S-diacylglycerol cysteine attachment. A coiled-coil region spans residues Leu-115–Arg-155. The disordered stretch occupies residues Ala-362–Glu-384. The span at Pro-368–Lys-378 shows a compositional bias: low complexity.

The protein belongs to the membrane fusion protein (MFP) (TC 8.A.1) family.

The protein localises to the cell inner membrane. Functionally, the periplasmic linker protein component of an organic solvent and antibiotic efflux pump; confers resistance to toluene, hexane, p-xylene, ampicillin, penicillin G, erythromycin, novobiocin and tetracycline. The protein is Multidrug/solvent efflux pump periplasmic linker protein MepA (mepA) of Pseudomonas putida (Arthrobacter siderocapsulatus).